The primary structure comprises 273 residues: Anthranilate synthase beta subunit 2, chloroplastic (273 aa).

The N-terminal 47 residues, 1-47 (MATAARLLPKIQSPASPAVAEARRRRPSSLRLGVTSGPARTLKQKLV), are a transit peptide targeting the chloroplast. The tract at residues 15–35 (ASPAVAEARRRRPSSLRLGVT) is disordered. The 200-residue stretch at 70–269 (PIIVIDNYDS…IKIIEGYEAL (200 aa)) folds into the Glutamine amidotransferase type-1 domain. An L-glutamine-binding site is contributed by 121 to 123 (GPG). The active-site Nucleophile is the Cys-148. L-glutamine contacts are provided by residues Gln-152 and 202–203 (SL). Catalysis depends on residues His-243 and Glu-245.

Heterotetramer consisting of two non-identical subunits: a beta subunit and a large alpha subunit. Expressed in roots and leaves.

It is found in the plastid. The protein resides in the chloroplast. The catalysed reaction is chorismate + L-glutamine = anthranilate + pyruvate + L-glutamate + H(+). It participates in amino-acid biosynthesis; L-tryptophan biosynthesis; L-tryptophan from chorismate: step 1/5. In terms of biological role, part of a heterotetrameric complex that catalyzes the two-step biosynthesis of anthranilate, an intermediate in the biosynthesis of L-tryptophan. In the first step, the glutamine-binding beta subunit of anthranilate synthase (AS) provides the glutamine amidotransferase activity which generates ammonia as a substrate that, along with chorismate, is used in the second step, catalyzed by the large alpha subunit of AS to produce anthranilate. The polypeptide is Anthranilate synthase beta subunit 2, chloroplastic (Oryza sativa subsp. japonica (Rice)).